The chain runs to 1176 residues: Growth-differentiation transition protein 5 (1176 aa).

A signal peptide spans 1–25 (MKNNFFKKTIILLIFLSIFILYSNA). At 26-913 (DEETITTPPG…DVPANENTLN (888 aa)) the chain is on the extracellular side. A helical membrane pass occupies residues 914–934 (LLTIVLPICSAVVVASSVMLG). Topologically, residues 935–1176 (RLFYKKKFKK…NVGYNVHEYF (242 aa)) are cytoplasmic. Low complexity-rich tracts occupy residues 965-974 (SNIENKSESI) and 1053-1066 (PQISPDSPQHSIPS). 2 disordered regions span residues 965–985 (SNIENKSESIATPQQRNEQKE) and 1050–1080 (VDTPQISPDSPQHSIPSSSPPPPPLPLPPST). The span at 1067–1078 (SSPPPPPLPLPP) shows a compositional bias: pro residues.

The protein belongs to the GDT family.

The protein localises to the membrane. The sequence is that of Growth-differentiation transition protein 5 (gdt5) from Dictyostelium discoideum (Social amoeba).